Here is a 231-residue protein sequence, read N- to C-terminus: Protein OPG061 (231 aa).

The protein belongs to the orthopoxvirus OPG058 family.

The protein localises to the host nucleus. Its subcellular location is the host nucleolus. The sequence is that of Protein OPG061 (OPG061) from Vaccinia virus (strain L-IVP) (VACV).